The sequence spans 141 residues: Putative pre-16S rRNA nuclease (141 aa).

This sequence belongs to the YqgF nuclease family.

The protein localises to the cytoplasm. In terms of biological role, could be a nuclease involved in processing of the 5'-end of pre-16S rRNA. The protein is Putative pre-16S rRNA nuclease of Roseiflexus sp. (strain RS-1).